The primary structure comprises 309 residues: Dihydroorotate dehydrogenase B (NAD(+)), catalytic subunit (309 aa).

Residues Ser21 and 45 to 46 (KA) contribute to the FMN site. Substrate-binding positions include Lys45 and 69–73 (NAIGL). Asn99 and Asn127 together coordinate FMN. Position 127 (Asn127) interacts with substrate. Cys130 serves as the catalytic Nucleophile. 2 residues coordinate FMN: Lys165 and Ile191. Residue 192 to 193 (NT) participates in substrate binding. Residues Gly217, 243-244 (GG), and 265-266 (GT) contribute to the FMN site.

The protein belongs to the dihydroorotate dehydrogenase family. Type 1 subfamily. Heterotetramer of 2 PyrK and 2 PyrD type B subunits. Requires FMN as cofactor.

It is found in the cytoplasm. It catalyses the reaction (S)-dihydroorotate + NAD(+) = orotate + NADH + H(+). Its pathway is pyrimidine metabolism; UMP biosynthesis via de novo pathway; orotate from (S)-dihydroorotate (NAD(+) route): step 1/1. Catalyzes the conversion of dihydroorotate to orotate with NAD(+) as electron acceptor. The sequence is that of Dihydroorotate dehydrogenase B (NAD(+)), catalytic subunit (pyrD) from Bacillus thuringiensis (strain Al Hakam).